Reading from the N-terminus, the 248-residue chain is NADH dehydrogenase [ubiquinone] flavoprotein 2, mitochondrial (248 aa).

The transit peptide at 1–31 (MFSLALRARASGLTAQWGRHARNLHKTAVQN) directs the protein to the mitochondrion. Residues Cys-134, Cys-139, Cys-175, and Cys-179 each coordinate [2Fe-2S] cluster. Tyr-192 bears the Phosphotyrosine; by SRC mark. Positions 229–248 (GLTSLTEPPKGPGFGVQAGL) are disordered.

It belongs to the complex I 24 kDa subunit family. Core subunit of respiratory chain NADH dehydrogenase (Complex I) which is composed of 45 different subunits. This is a component of the flavoprotein-sulfur (FP) fragment of the enzyme. Requires [2Fe-2S] cluster as cofactor.

Its subcellular location is the mitochondrion inner membrane. It carries out the reaction a ubiquinone + NADH + 5 H(+)(in) = a ubiquinol + NAD(+) + 4 H(+)(out). Functionally, core subunit of the mitochondrial membrane respiratory chain NADH dehydrogenase (Complex I) which catalyzes electron transfer from NADH through the respiratory chain, using ubiquinone as an electron acceptor. Parts of the peripheral arm of the enzyme, where the electrons from NADH are accepted by flavin mononucleotide (FMN) and then passed along a chain of iron-sulfur clusters by electron tunnelling to the final acceptor ubiquinone. Contains one iron-sulfur cluster. The chain is NADH dehydrogenase [ubiquinone] flavoprotein 2, mitochondrial from Rattus norvegicus (Rat).